A 270-amino-acid polypeptide reads, in one-letter code: Probable inner membrane protein BTH_II0599 (270 aa).

The next 6 helical transmembrane spans lie at 24–44 (RNPL…MLVS), 45–65 (LVPV…AVGF), 98–118 (LLTL…CSAL), 150–170 (ALIA…APVL), 198–218 (VYGL…AALM), and 226–246 (YALM…YCSF).

The protein localises to the cell inner membrane. In terms of biological role, (Microbial infection) Probably transports the toxic C-terminal region of CdiA-2 from B.pseudomallei strain 1026b across the inner membrane to the cytoplasm, where CdiA has a toxic effect. Expression in E.coli makes the bacteria sensitive to the tRNase domain of B.pseudomallei strain 1026b CdiA-2. This chain is Probable inner membrane protein BTH_II0599, found in Burkholderia thailandensis (strain ATCC 700388 / DSM 13276 / CCUG 48851 / CIP 106301 / E264).